The primary structure comprises 189 residues: UPF0316 protein Sca_1484 (189 aa).

The next 3 membrane-spanning stretches (helical) occupy residues 8–28, 40–60, and 66–86; these read PWLM…CLTV, VAAA…GLVM, and FQNI…GMKI.

This sequence belongs to the UPF0316 family.

Its subcellular location is the cell membrane. In Staphylococcus carnosus (strain TM300), this protein is UPF0316 protein Sca_1484.